Consider the following 265-residue polypeptide: Upstream stimulatory factor (265 aa).

The segment covering 1–18 has biased composition (basic and acidic residues); sequence MDVQDHTLDQGPQDKDKD. 2 disordered regions span residues 1 to 21 and 119 to 149; these read MDVQDHTLDQGPQDKDKDLEE and ASAAIPGDGAGPASGGEQQPGITQPSGAAGG. Over residues 134 to 144 the composition is skewed to polar residues; it reads GEQQPGITQPS. One can recognise a bHLH domain in the interval 190–245; that stretch reads RRRATHNEVERRRRDKINNWIVKLSKIIPDCNIDHSKQGQSKGGILTKTCDYIHDL.

In terms of assembly, efficient DNA binding requires dimerization with another bHLH protein. Binds DNA as a homodimer or a heterodimer. In terms of tissue distribution, enriched in ectodermal tissue.

The protein localises to the nucleus. May act as a transcription factor which recognizes the CACGTG motif on SPEC gene promoters. The chain is Upstream stimulatory factor from Strongylocentrotus purpuratus (Purple sea urchin).